A 381-amino-acid chain; its full sequence is S-(hydroxymethyl)glutathione dehydrogenase (381 aa).

Cys-49 contributes to the Zn(2+) binding site. His-50 contributes to the NAD(+) binding site. 7 residues coordinate Zn(2+): His-71, Glu-72, Cys-101, Cys-104, Cys-107, Cys-115, and Cys-178. Residues 203-208, Asp-227, and 298-300 each bind NAD(+); these read GGGIVG and IGV.

It belongs to the zinc-containing alcohol dehydrogenase family. Class-III subfamily. Zn(2+) serves as cofactor.

It catalyses the reaction a primary alcohol + NAD(+) = an aldehyde + NADH + H(+). The catalysed reaction is a secondary alcohol + NAD(+) = a ketone + NADH + H(+). It carries out the reaction S-(hydroxymethyl)glutathione + NADP(+) = S-formylglutathione + NADPH + H(+). The enzyme catalyses S-(hydroxymethyl)glutathione + NAD(+) = S-formylglutathione + NADH + H(+). It catalyses the reaction S-nitrosoglutathione + NADH + H(+) = S-(hydroxysulfenamide)glutathione + NAD(+). In terms of biological role, oxidizes long-chain alcohols and, in the presence of glutathione, is able to oxidize formaldehyde. Also acts as a S-nitroso-glutathione reductase by catalyzing the NADH-dependent reduction of S-nitrosoglutathione, thereby regulating protein S-nitrosylation. The sequence is that of S-(hydroxymethyl)glutathione dehydrogenase (FDH1) from Candida maltosa (Yeast).